A 220-amino-acid chain; its full sequence is IQ domain-containing protein F3 (220 aa).

Residues 1-22 are compositionally biased toward basic and acidic residues; it reads MELDQDQKVETPEAAENGKDEM. Residues 1–81 form a disordered region; that stretch reads MELDQDQKVE…KQIQDEKTGI (81 aa). Over residues 23–50 the composition is skewed to acidic residues; it reads QLEEQTQDEDTTETETETETETEAEAEG. Residues 69-93 are a coiled coil; that stretch reads QAEKQIQDEKTGIKEADRAIQEQTQ. Positions 146–175 constitute an IQ domain; that stretch reads AELAGVKIQAWWRGTLVRRTLLLAILSAWT.

The sequence is that of IQ domain-containing protein F3 (Iqcf3) from Rattus norvegicus (Rat).